The chain runs to 157 residues: Cell cycle control protein 50C (157 aa).

Over 1 to 34 the chain is Cytoplasmic; sequence MEERAQHCLSRLLDNSALKQQELPIHRLYFTARR. Residues 35-55 traverse the membrane as a helical segment; that stretch reads VLFVFFATGIFCLCMGIILIL. At 56 to 157 the chain is on the extracellular side; sequence SARSTQEIEI…LFLNQVDFSV (102 aa). N-linked (GlcNAc...) asparagine glycosylation occurs at N66.

Belongs to the CDC50/LEM3 family.

It is found in the membrane. This Pan troglodytes (Chimpanzee) protein is Cell cycle control protein 50C (TMEM30C).